Here is a 262-residue protein sequence, read N- to C-terminus: MKFTVLTLFPEMFAPVHESILKRAQAAQLIEVSLINFRDYAASKHKNVDDVPYGGGAGMVLKPEPLFAALRDLPPSPGRRRIVLLSPQGEVFQQRKAEEWSRWDELVFICGHYEGFDERIRSLADEEVSLGDFVLTGGELAAMVMMDAVARLLPGVLGEKASAEEDSHSGGLLEYPHYTRPPVFEGMEVPDVLLSGHHRRIEEWRRKESLRRTFLKRPDLFAKVEFRAGDFNLLEELIREHPELAQERSRWEHLRPKPKKRR.

S-adenosyl-L-methionine contacts are provided by residues Gly-111 and 130–135; that span reads LGDFVL.

The protein belongs to the RNA methyltransferase TrmD family. As to quaternary structure, homodimer.

The protein resides in the cytoplasm. It catalyses the reaction guanosine(37) in tRNA + S-adenosyl-L-methionine = N(1)-methylguanosine(37) in tRNA + S-adenosyl-L-homocysteine + H(+). In terms of biological role, specifically methylates guanosine-37 in various tRNAs. In Desulfitobacterium hafniense (strain Y51), this protein is tRNA (guanine-N(1)-)-methyltransferase.